The chain runs to 169 residues: MPEMVDSNSTPSSSTGSRTVLLLLRVLTFVFLLIALILIAIVKQTDDETGVEIKFNDIYAYRYMISTIIIGFAYNLLQMALSIFTVVSGNRVLSGDGGYLFDFFGDKIISYLLISGSAAGFGVTVELGRGVPSNSFMDKANASASLLLIAFLFTAVASTFTSFALPKKD.

The Cytoplasmic portion of the chain corresponds to Met1 to Leu21. The chain crosses the membrane as a helical span at residues Leu22–Val42. At Lys43 to Ser66 the chain is on the extracellular side. A helical transmembrane segment spans residues Thr67–Val87. Topologically, residues Ser88 to Lys107 are cytoplasmic. The chain crosses the membrane as a helical span at residues Ile108–Gly128. The Extracellular portion of the chain corresponds to Arg129–Ser145. N-linked (GlcNAc...) asparagine glycosylation is present at Asn141. The chain crosses the membrane as a helical span at residues Leu146–Pro166. The Cytoplasmic portion of the chain corresponds to Lys167–Asp169.

Belongs to the Casparian strip membrane proteins (CASP) family. In terms of assembly, homodimer and heterodimers.

It is found in the cell membrane. The polypeptide is CASP-like protein 4D1 (Glycine max (Soybean)).